The chain runs to 229 residues: Heptaprenylglyceryl phosphate synthase (229 aa).

Lys-12 contacts sn-glycerol 1-phosphate. Residues Asp-14 and Ser-40 each coordinate Mg(2+). Residues Tyr-159–Gly-164, Gly-189, and Gly-209–Asn-210 each bind sn-glycerol 1-phosphate.

This sequence belongs to the GGGP/HepGP synthase family. Group I subfamily. In terms of assembly, homodimer. Mg(2+) serves as cofactor.

It carries out the reaction sn-glycerol 1-phosphate + all-trans-heptaprenyl diphosphate = 3-heptaprenyl-sn-glycero-1-phosphate + diphosphate. Its pathway is membrane lipid metabolism; glycerophospholipid metabolism. Functionally, prenyltransferase that catalyzes in vivo the transfer of the heptaprenyl moiety of heptaprenyl pyrophosphate (HepPP; 35 carbon atoms) to the C3 hydroxyl of sn-glycerol-1-phosphate (G1P), producing heptaprenylglyceryl phosphate (HepGP). This reaction is an ether-bond-formation step in the biosynthesis of archaea-type G1P-based membrane lipids found in Bacillales. The chain is Heptaprenylglyceryl phosphate synthase from Bacillus velezensis (strain DSM 23117 / BGSC 10A6 / LMG 26770 / FZB42) (Bacillus amyloliquefaciens subsp. plantarum).